A 2026-amino-acid polypeptide reads, in one-letter code: Fatty acid synthase subunit beta (2026 aa).

The tract at residues 148-526 (ILMAFGGQGS…VDGRGVRIIA (379 aa)) is acetyltransferase (AT) domain. The active-site For acetyltransferase activity is the S268. The enoyl reductase (ER) domain stretch occupies residues 579–824 (SQLLQAPPII…LILAAAGVAD (246 aa)). The interval 1130–1604 (SQVTGSVRSA…LPGDQLTVRI (475 aa)) is dehydratase (DH) domain. In terms of domain architecture, MaoC-like spans 1512 to 1625 (PGLIDNGSRT…LSVAAYREGT (114 aa)). Residues 1643 to 2016 (YLFTGQGSQA…LEEAAAVTGS (374 aa)) are malonyl/palmitoyl transferase (MT/PT) domain. Catalysis depends on S1788, which acts as the For malonyltransferase activity.

The protein belongs to the fungal fatty acid synthetase subunit beta family. [Alpha(6)beta(6)] hexamers of two multifunctional subunits (alpha and beta).

The catalysed reaction is acetyl-CoA + n malonyl-CoA + 2n NADPH + 4n H(+) = a long-chain-acyl-CoA + n CoA + n CO2 + 2n NADP(+).. The enzyme catalyses holo-[ACP] + acetyl-CoA = acetyl-[ACP] + CoA. It carries out the reaction holo-[ACP] + malonyl-CoA = malonyl-[ACP] + CoA. It catalyses the reaction a (3R)-hydroxyacyl-[ACP] = a (2E)-enoyl-[ACP] + H2O. The catalysed reaction is a 2,3-saturated acyl-[ACP] + NAD(+) = a (2E)-enoyl-[ACP] + NADH + H(+). The enzyme catalyses (9Z)-octadecenoyl-[ACP] + H2O = (9Z)-octadecenoate + holo-[ACP] + H(+). It functions in the pathway secondary metabolite biosynthesis. Functionally, fatty acid synthase beta subunit; part of the gene cluster that mediates the biosynthesis of oryzines, natural products with an unusual maleidride backbone. The two subunits of the fungal fatty acid synthase oryfasA and oryfasB probably form octenoic acid. This fatty acid is most likely activated by the acyl-CoA ligase oryP to give octenyl-CoA before the citrate synthase-like protein oryE catalyzes condensation with oxaloacetate to form tricarboxylic acid. The next steps of the pathways are conjectural, but a favorite possible route has been proposed, beginning with decarboxylation and concomitant dehydration by the decarboxylase oryM, followed by tautomerization, which may lead to the production of a diene intermediate. Reduction of this diene intermediate could give the known metabolite piliformic acid. On the pathway to oryzine B and oryzine A, however, hydroxylation of the diene by the alpha-ketoglutarate-dependent dioxygenase oryG and lactonisation by the lactonohydrolases oryH or oryL could give oryzine B directly. Finally, enoyl reduction by the dehydrogenase oryD would then convert oryzine B into oryzine A. This Aspergillus oryzae (strain ATCC 42149 / RIB 40) (Yellow koji mold) protein is Fatty acid synthase subunit beta.